A 465-amino-acid polypeptide reads, in one-letter code: 3-isopropylmalate dehydratase large subunit (465 aa).

The [4Fe-4S] cluster site is built by cysteine 347, cysteine 407, and cysteine 410. A disordered region spans residues 417-443; the sequence is TLKPGERSASTSNRNFEGRQGKGGRTH.

It belongs to the aconitase/IPM isomerase family. LeuC type 1 subfamily. As to quaternary structure, heterodimer of LeuC and LeuD. The cofactor is [4Fe-4S] cluster.

It carries out the reaction (2R,3S)-3-isopropylmalate = (2S)-2-isopropylmalate. The protein operates within amino-acid biosynthesis; L-leucine biosynthesis; L-leucine from 3-methyl-2-oxobutanoate: step 2/4. In terms of biological role, catalyzes the isomerization between 2-isopropylmalate and 3-isopropylmalate, via the formation of 2-isopropylmaleate. In Thermobifida fusca (strain YX), this protein is 3-isopropylmalate dehydratase large subunit.